The following is a 115-amino-acid chain: Nitrogenase-stabilizing/protective protein NifW (115 aa).

The protein belongs to the NifW family. In terms of assembly, homotrimer; associates with NifD.

Functionally, may protect the nitrogenase Fe-Mo protein from oxidative damage. The polypeptide is Nitrogenase-stabilizing/protective protein NifW (Azotobacter vinelandii (strain DJ / ATCC BAA-1303)).